The primary structure comprises 136 residues: Large ribosomal subunit protein bL21 (136 aa).

Belongs to the bacterial ribosomal protein bL21 family. As to quaternary structure, part of the 50S ribosomal subunit. Contacts protein L20.

This protein binds to 23S rRNA in the presence of protein L20. In Gloeothece citriformis (strain PCC 7424) (Cyanothece sp. (strain PCC 7424)), this protein is Large ribosomal subunit protein bL21.